A 269-amino-acid polypeptide reads, in one-letter code: Basic leucine zipper 19 (269 aa).

The region spanning 140 to 196 (DPKRVKRILANRQSAQRSRVRKLQYISELERSVTTLQMEVSALSPRVAFLDHQRSLL) is the bZIP domain. Residues 142–161 (KRVKRILANRQSAQRSRVRK) form a basic motif region. The tract at residues 168 to 196 (LERSVTTLQMEVSALSPRVAFLDHQRSLL) is leucine-zipper.

As to expression, expressed in roots and shoots.

It localises to the nucleus. Functionally, transcription regulator. This is Basic leucine zipper 19 (BZIP19) from Oryza sativa subsp. japonica (Rice).